The sequence spans 320 residues: Ferrochelatase (320 aa).

2 residues coordinate Fe cation: histidine 194 and glutamate 275.

Belongs to the ferrochelatase family. In terms of assembly, monomer.

It localises to the cytoplasm. It catalyses the reaction heme b + 2 H(+) = protoporphyrin IX + Fe(2+). It functions in the pathway porphyrin-containing compound metabolism; protoheme biosynthesis; protoheme from protoporphyrin-IX: step 1/1. In terms of biological role, catalyzes the ferrous insertion into protoporphyrin IX. The chain is Ferrochelatase from Shigella boydii serotype 18 (strain CDC 3083-94 / BS512).